The chain runs to 429 residues: Glutamate-1-semialdehyde 2,1-aminomutase 2 (429 aa).

The residue at position 268 (Lys268) is an N6-(pyridoxal phosphate)lysine.

This sequence belongs to the class-III pyridoxal-phosphate-dependent aminotransferase family. HemL subfamily. In terms of assembly, homodimer. It depends on pyridoxal 5'-phosphate as a cofactor.

Its subcellular location is the cytoplasm. The enzyme catalyses (S)-4-amino-5-oxopentanoate = 5-aminolevulinate. Its pathway is porphyrin-containing compound metabolism; protoporphyrin-IX biosynthesis; 5-aminolevulinate from L-glutamyl-tRNA(Glu): step 2/2. The protein is Glutamate-1-semialdehyde 2,1-aminomutase 2 of Staphylococcus aureus (strain USA300).